The chain runs to 1321 residues: C-Jun-amino-terminal kinase-interacting protein 4 (1321 aa).

Met-1 carries the N-acetylmethionine modification. An RH1 domain is found at Val-7–Leu-95. Residues Ala-66–Met-166 adopt a coiled-coil conformation. Residues Ser-109, Ser-183, Ser-185, Ser-194, and Ser-203 each carry the phosphoserine modification. Residues Ser-203–Thr-292 form a disordered region. Thr-217 carries the phosphothreonine modification. Over residues Glu-236–Glu-253 the composition is skewed to polar residues. Phosphoserine is present on residues Ser-238, Ser-251, Ser-265, Ser-268, and Ser-272. Residues Asp-266–Val-285 are compositionally biased toward polar residues. Residue Thr-292 is modified to Phosphothreonine. Phosphoserine occurs at positions 311, 329, 332, and 347. Residues Thr-348, Thr-365, and Thr-418 each carry the phosphothreonine modification. The stretch at Arg-408 to Met-534 forms a coiled coil. The span at Leu-473–Asp-489 shows a compositional bias: basic and acidic residues. Disordered stretches follow at residues Leu-473–Arg-500 and Ser-563–Pro-600. The RH2 domain maps to Arg-500–Glu-571. Residue Thr-586 is modified to Phosphothreonine. Ser-588 is modified (phosphoserine). Position 595 is a phosphothreonine (Thr-595). A phosphoserine mark is found at Ser-705, Ser-728, Ser-730, Ser-732, and Ser-733. Residues Ser-724–Val-758 adopt a coiled-coil conformation. The tract at residues Gly-854 to Val-906 is disordered. Over residues Ala-855 to Ala-864 the composition is skewed to polar residues. The segment covering Met-874–Glu-883 has biased composition (acidic residues). Residues Ala-894–Glu-903 are compositionally biased toward low complexity. A Phosphoserine modification is found at Ser-1188. The interval Pro-1239–Leu-1266 is disordered. A Phosphothreonine modification is found at Thr-1264.

Belongs to the JIP scaffold family. Homodimer. The homodimer interacts with ARF6, forming a heterotetramer. Homooligomer. Interacts with MAX, MAPK14, MAP3K3, MYC, KNS2 and MAP2K4. Interaction with KNS2 is important in the formation of ternary complex with MAPK8. Interacts with NFKB1. Interacts with PIP4P1. Interacts with PIKFYVE. In terms of assembly, interacts with MAPK8, MAPK9, MAPK10. Post-translationally, phosphorylated by MAPK8 and MAPK14. As to expression, expressed only in testis on the round spermatids of stage I, II and II. Absent in spermatogonia and spermatocyte. Expressed in testis and in acute myeloid leukemia (AML) patients. In terms of tissue distribution, expressed in testis.

It localises to the cytoplasm. The protein resides in the perinuclear region. It is found in the lysosome membrane. Its subcellular location is the cytoplasmic vesicle. The protein localises to the secretory vesicle. It localises to the acrosome. May play a role in spermatozoa-egg-interaction. Functionally, the JNK-interacting protein (JIP) group of scaffold proteins selectively mediates JNK signaling by aggregating specific components of the MAPK cascade to form a functional JNK signaling module. Regulates lysosomal positioning by acting as an adapter protein which links PIP4P1-positive lysosomes to the dynein-dynactin complex. Assists PIKFYVE selective functionality in microtubule-based endosome-to-TGN trafficking. The protein is C-Jun-amino-terminal kinase-interacting protein 4 of Homo sapiens (Human).